The following is a 377-amino-acid chain: 4-hydroxy-3-methylbut-2-en-1-yl diphosphate synthase (flavodoxin) (377 aa).

The [4Fe-4S] cluster site is built by cysteine 272, cysteine 275, cysteine 307, and glutamate 314.

The protein belongs to the IspG family. [4Fe-4S] cluster is required as a cofactor.

The catalysed reaction is (2E)-4-hydroxy-3-methylbut-2-enyl diphosphate + oxidized [flavodoxin] + H2O + 2 H(+) = 2-C-methyl-D-erythritol 2,4-cyclic diphosphate + reduced [flavodoxin]. The protein operates within isoprenoid biosynthesis; isopentenyl diphosphate biosynthesis via DXP pathway; isopentenyl diphosphate from 1-deoxy-D-xylulose 5-phosphate: step 5/6. Functionally, converts 2C-methyl-D-erythritol 2,4-cyclodiphosphate (ME-2,4cPP) into 1-hydroxy-2-methyl-2-(E)-butenyl 4-diphosphate. In Zymomonas mobilis subsp. mobilis (strain ATCC 31821 / ZM4 / CP4), this protein is 4-hydroxy-3-methylbut-2-en-1-yl diphosphate synthase (flavodoxin).